The following is a 314-amino-acid chain: MSFPAPKPKAPELPQKLQHKLECNQGAVRAVRFNVDGNYCMTCGSDKSLKLWNPHKGSLLKTYSGHGYEVLDTAGSCDNSQLCSCSSDKTVILWDVAQGQVVRKFRGHAGKVNCVQFNEEATVIISGSIDSSIRCWDCRSRRPDAIQIMDEAKDGISSVKVSAHEILAGSVDGNLRRYDLRKGEMCADYLGSPITCVSFSQDSQCLLASSLDSTLRLLDKDTGELLGEYTGHQNLSYKLDSCLSEKDTHVLSCSEDGTVCFWDLVEGSLVLKLPVGKAVVQSLSFHPTECCLLTASEGGVQVWRGASYEEEGGS.

7 WD repeats span residues 23–62 (CNQG…LLKT), 65–104 (GHGY…VVRK), 107–146 (GHAG…PDAI), 151–188 (EAKD…MCAD), 189–228 (YLGS…LLGE), 231–272 (GHQN…LVLK), and 275–313 (VGKA…EEGG).

This sequence belongs to the WD repeat MORG1 family.

It is found in the cytoplasm. In terms of biological role, molecular scaffold protein for various multimeric protein complexes. Acts as a module in the assembly of a multicomponent scaffold for the ERK pathway, linking ERK responses to specific agonists. Also involved in response to hypoxia by acting as a negative regulator of HIF1A/HIF-1-alpha. This is WD repeat domain-containing protein 83 (wdr83) from Xenopus laevis (African clawed frog).